Reading from the N-terminus, the 396-residue chain is S-adenosylmethionine synthase (396 aa).

Histidine 16 contacts ATP. Aspartate 18 contributes to the Mg(2+) binding site. Residue glutamate 44 participates in K(+) binding. Glutamate 57 and glutamine 100 together coordinate L-methionine. Residues 100–110 (QSVDIAQGVDR) form a flexible loop region. ATP contacts are provided by residues 165–167 (DAK), aspartate 240, 246–247 (RK), alanine 263, and lysine 267. Residue aspartate 240 coordinates L-methionine. Residue lysine 271 coordinates L-methionine.

It belongs to the AdoMet synthase family. Homotetramer; dimer of dimers. Mg(2+) is required as a cofactor. The cofactor is K(+).

The protein resides in the cytoplasm. The enzyme catalyses L-methionine + ATP + H2O = S-adenosyl-L-methionine + phosphate + diphosphate. Its pathway is amino-acid biosynthesis; S-adenosyl-L-methionine biosynthesis; S-adenosyl-L-methionine from L-methionine: step 1/1. Functionally, catalyzes the formation of S-adenosylmethionine (AdoMet) from methionine and ATP. The overall synthetic reaction is composed of two sequential steps, AdoMet formation and the subsequent tripolyphosphate hydrolysis which occurs prior to release of AdoMet from the enzyme. The protein is S-adenosylmethionine synthase of Pseudomonas putida (strain W619).